A 221-amino-acid polypeptide reads, in one-letter code: Sugar transporter SWEET1 (221 aa).

A run of 7 helical transmembrane segments spans residues 3–23 (AGGF…LGMF), 42–62 (VQFL…SYGA), 68–88 (ILIV…LAYL), 96–116 (VVLL…GYFW), 126–146 (LQLL…SPLA), 160–180 (LSYP…LYGF), and 186–206 (YIMV…WLFW). Residues 10–94 (LIYGACVVFT…LAYLHYCPRK (85 aa)) enclose the MtN3/slv 1 domain. The MtN3/slv 2 domain maps to 127-212 (QLLGLFCSVF…WLFWKYPQEQ (86 aa)). The interval 149 to 221 (AKVIQTKSTQ…QDRNYWFLQT (73 aa)) is mediates interaction with TRPV2.

Belongs to the SWEET sugar transporter family. Interacts with TRPV2; the interaction probably occurs intracellularly and depends on TRPV2 N-glycosylation.

It localises to the golgi apparatus membrane. It is found in the cell membrane. Functionally, mediates sugar transport across membranes. May stimulate V(D)J recombination by the activation of RAG1. This Papio anubis (Olive baboon) protein is Sugar transporter SWEET1 (SLC50A1).